The sequence spans 72 residues: MARDDVIEVDGKVIEALPNATFKVELDNKHVVLCRISGKMRMHYIRIALGDRVKLELTPYSLDRGRITFRYK.

The 72-residue stretch at 1-72 (MARDDVIEVD…DRGRITFRYK (72 aa)) folds into the S1-like domain.

The protein belongs to the IF-1 family. As to quaternary structure, component of the 30S ribosomal translation pre-initiation complex which assembles on the 30S ribosome in the order IF-2 and IF-3, IF-1 and N-formylmethionyl-tRNA(fMet); mRNA recruitment can occur at any time during PIC assembly.

The protein localises to the cytoplasm. Its function is as follows. One of the essential components for the initiation of protein synthesis. Stabilizes the binding of IF-2 and IF-3 on the 30S subunit to which N-formylmethionyl-tRNA(fMet) subsequently binds. Helps modulate mRNA selection, yielding the 30S pre-initiation complex (PIC). Upon addition of the 50S ribosomal subunit IF-1, IF-2 and IF-3 are released leaving the mature 70S translation initiation complex. The polypeptide is Translation initiation factor IF-1 (Helicobacter acinonychis (strain Sheeba)).